The chain runs to 339 residues: Oncoprotein MEQ (339 aa).

The segment at 1–80 (MSQEPEPGAM…ARRRRRKQTD (80 aa)) is disordered. S42 bears the Phosphoserine; by host CDK2 mark. Positions 57 to 84 (KQKLERRRKRNRDAARRRRRKQTDYVDK) are basic motif. The 64-residue stretch at 57–120 (KQKLERRRKR…TSLRVQLACH (64 aa)) folds into the bZIP domain. Over residues 60-77 (LERRRKRNRDAARRRRRK) the composition is skewed to basic residues. The short motif at 62-78 (RRRKRNRDAARRRRRKQ) is the Nuclear localization signal element. Residues 85-113 (LHEACEELQRANEHLRKEIRDLRTECTSL) form a leucine-zipper region. Residues 120–339 (HEPVCPMAVP…VWWFPGDGRP (220 aa)) are transactivation domain. Positions 145–160 (PEPPICTPPPPSPDEP) are enriched in pro residues. A disordered region spans residues 145-172 (PEPPICTPPPPSPDEPNAPHCSGSQPPI).

The protein belongs to the bZIP family. Jun subfamily. In terms of assembly, homodimer. Interacts with host JUN; this interaction allows MEQ to engage in host cell processes by disguising itself as a cellular JUN. Phosphorylated by host CDK2; this phosphorylation greatly reduces the DNA binding activity of MEQ.

The protein resides in the host nucleus. Its subcellular location is the host nucleolus. Its function is as follows. Functions as a DNA-binding transcription factor. Promotes transformation, host cell growth, host cell-cycle progression through G1/S phase, and possesses antiapoptotic activity. Forms functional heterodimers with host JUN. These heterodimers bind with high affinity DNA sequences called MEQ-responsive elements MERE I (TGACA/GTCA), while MEQ homodimers bind a second type of sites termed MERE II (ACACA). Both homo and heterodimerization of MEQ are required for oncogenesis. The protein is Oncoprotein MEQ (MDV005) of Gallid herpesvirus 2 (strain Chicken/Md5/ATCC VR-987) (GaHV-2).